A 473-amino-acid polypeptide reads, in one-letter code: MSPQTETKASVGFKAGVKEYKLTYYTPEYETKDTDILAAFRVTPQPGVPPEEAGAAVAAESSTGTWTTVWTDGLTSLDRYKGRCYHIEPVLGEKDQYICYVAYPLDLFEEGSVTNMFTSIVGNVFGFKALRALRLEDLRIPPAYIKTFQGPPHGIQVERDKLNKYGRPLLGCTIKPKLGLSAKNYGRAVYECLRGGLDFTKDDENVNSQPFMRWRDRFLFCAEAIYKAQAETGEIKGHYLNATAGTCEEMIKRAVFARELGVPIVMHDYLTGGFTANTTLAHYCRDNGLLLHIHRAMHAVIDRQKNHGMHFRVLAKALRLSGGDHIHAGTVVGKLEGEREITLGFVDLLRDDFVEKDRSRGIYFTQDWVSLPGVIPVASGGIHVWHMPALTEIFGDDSVLQFGGGTLGHPWGNAPGAVANRVALEACVQARNEGRDLAAEGNTIIREACKWSPELAAACEVWKEIKFEFPAMD.

The propeptide occupies Met1–Ser2. N-acetylproline is present on Pro3. The residue at position 14 (Lys14) is an N6,N6,N6-trimethyllysine. 2 residues coordinate substrate: Asn123 and Thr173. The active-site Proton acceptor is Lys175. Lys177 lines the substrate pocket. Mg(2+) is bound by residues Lys201, Asp203, and Glu204. The residue at position 201 (Lys201) is an N6-carboxylysine. His294 acts as the Proton acceptor in catalysis. Residues Arg295, His327, and Ser379 each coordinate substrate.

This sequence belongs to the RuBisCO large chain family. Type I subfamily. As to quaternary structure, heterohexadecamer of 8 large chains and 8 small chains; disulfide-linked. The disulfide link is formed within the large subunit homodimers. It depends on Mg(2+) as a cofactor. In terms of processing, the disulfide bond which can form in the large chain dimeric partners within the hexadecamer appears to be associated with oxidative stress and protein turnover.

It is found in the plastid. It localises to the chloroplast. The catalysed reaction is 2 (2R)-3-phosphoglycerate + 2 H(+) = D-ribulose 1,5-bisphosphate + CO2 + H2O. The enzyme catalyses D-ribulose 1,5-bisphosphate + O2 = 2-phosphoglycolate + (2R)-3-phosphoglycerate + 2 H(+). In terms of biological role, ruBisCO catalyzes two reactions: the carboxylation of D-ribulose 1,5-bisphosphate, the primary event in carbon dioxide fixation, as well as the oxidative fragmentation of the pentose substrate in the photorespiration process. Both reactions occur simultaneously and in competition at the same active site. This Ajuga chamaepitys (Yellow bugle) protein is Ribulose bisphosphate carboxylase large chain.